Consider the following 511-residue polypeptide: UPF0288 protein MK0796 (511 aa).

It belongs to the UPF0288 family.

This chain is UPF0288 protein MK0796, found in Methanopyrus kandleri (strain AV19 / DSM 6324 / JCM 9639 / NBRC 100938).